The following is a 240-amino-acid chain: 31 kDa outer-membrane immunogenic protein (240 aa).

The first 19 residues, 1–19 (MKSVILASIAAMFATSAMA), serve as a signal peptide directing secretion. The tract at residues 48 to 83 (NAGYAGGKFKHPFSSFDKEDNEQVSGSLDVTAGGFV) is epitope recognized by the monoclonal antibody A59/10F09/G10.

This sequence belongs to the Omp25/RopB family. As to quaternary structure, oligomeric.

The protein resides in the cell outer membrane. Functionally, major outer membrane protein associated with peptidoglycans. May function as a porin. The protein is 31 kDa outer-membrane immunogenic protein (omp31) of Brucella melitensis biotype 1 (strain ATCC 23456 / CCUG 17765 / NCTC 10094 / 16M).